We begin with the raw amino-acid sequence, 191 residues long: Guanylate kinase (191 aa).

Residues 8–188 (GRLVVLAGPS…AVSDIKEILV (181 aa)) enclose the Guanylate kinase-like domain. 15–22 (GPSAVGKS) serves as a coordination point for ATP.

Belongs to the guanylate kinase family.

The protein resides in the cytoplasm. The catalysed reaction is GMP + ATP = GDP + ADP. Its function is as follows. Essential for recycling GMP and indirectly, cGMP. This Corynebacterium diphtheriae (strain ATCC 700971 / NCTC 13129 / Biotype gravis) protein is Guanylate kinase.